The sequence spans 150 residues: Transcriptional repressor NrdR (150 aa).

The segment at 3–34 is a zinc-finger region; that stretch reads CPFCGYEDTFVIDTREIEDQKVIRRRRECPNC. The region spanning 49 to 139 is the ATP-cone domain; that stretch reads IMVIKKDGRR…VYQEFSSLEE (91 aa).

It belongs to the NrdR family. Zn(2+) is required as a cofactor.

Negatively regulates transcription of bacterial ribonucleotide reductase nrd genes and operons by binding to NrdR-boxes. This Dictyoglomus turgidum (strain DSM 6724 / Z-1310) protein is Transcriptional repressor NrdR.